A 375-amino-acid polypeptide reads, in one-letter code: Anhydro-N-acetylmuramic acid kinase (375 aa).

An ATP-binding site is contributed by 19-26 (GTSLDGVD).

It belongs to the anhydro-N-acetylmuramic acid kinase family.

It catalyses the reaction 1,6-anhydro-N-acetyl-beta-muramate + ATP + H2O = N-acetyl-D-muramate 6-phosphate + ADP + H(+). The protein operates within amino-sugar metabolism; 1,6-anhydro-N-acetylmuramate degradation. Its pathway is cell wall biogenesis; peptidoglycan recycling. Functionally, catalyzes the specific phosphorylation of 1,6-anhydro-N-acetylmuramic acid (anhMurNAc) with the simultaneous cleavage of the 1,6-anhydro ring, generating MurNAc-6-P. Is required for the utilization of anhMurNAc either imported from the medium or derived from its own cell wall murein, and thus plays a role in cell wall recycling. The protein is Anhydro-N-acetylmuramic acid kinase of Ruegeria sp. (strain TM1040) (Silicibacter sp.).